Reading from the N-terminus, the 310-residue chain is Glycine--tRNA ligase alpha subunit (310 aa).

This sequence belongs to the class-II aminoacyl-tRNA synthetase family. As to quaternary structure, tetramer of two alpha and two beta subunits.

It is found in the cytoplasm. The catalysed reaction is tRNA(Gly) + glycine + ATP = glycyl-tRNA(Gly) + AMP + diphosphate. The sequence is that of Glycine--tRNA ligase alpha subunit from Aliivibrio salmonicida (strain LFI1238) (Vibrio salmonicida (strain LFI1238)).